The primary structure comprises 740 residues: Catalase-peroxidase (740 aa).

The segment covering 1-16 (MSENHDAIVTDAKTEE) has biased composition (basic and acidic residues). The interval 1-38 (MSENHDAIVTDAKTEETDGCPVAHGRAPHPTQGGGNRQ) is disordered. The segment at residues 108 to 231 (WHSAGTYRIS…LGAVQMGLIY (124 aa)) is a cross-link (tryptophyl-tyrosyl-methioninium (Trp-Tyr) (with M-257)). The active-site Proton acceptor is His109. Residues 231-257 (YVNPEGPNGNPDPIAAARDIRETFRRM) constitute a cross-link (tryptophyl-tyrosyl-methioninium (Tyr-Met) (with W-108)). Residue His272 participates in heme b binding.

This sequence belongs to the peroxidase family. Peroxidase/catalase subfamily. Homodimer. It depends on heme b as a cofactor. Formation of the three residue Trp-Tyr-Met cross-link is important for the catalase, but not the peroxidase activity of the enzyme.

The catalysed reaction is H2O2 + AH2 = A + 2 H2O. The enzyme catalyses 2 H2O2 = O2 + 2 H2O. Its function is as follows. Bifunctional enzyme with both catalase and broad-spectrum peroxidase activity. This is Catalase-peroxidase from Streptomyces coelicolor (strain ATCC BAA-471 / A3(2) / M145).